We begin with the raw amino-acid sequence, 154 residues long: Flagellar assembly factor FliW (154 aa).

It belongs to the FliW family. In terms of assembly, interacts with translational regulator CsrA and flagellin(s).

Its subcellular location is the cytoplasm. Acts as an anti-CsrA protein, binds CsrA and prevents it from repressing translation of its target genes, one of which is flagellin. Binds to flagellin and participates in the assembly of the flagellum. This chain is Flagellar assembly factor FliW, found in Carboxydothermus hydrogenoformans (strain ATCC BAA-161 / DSM 6008 / Z-2901).